A 530-amino-acid polypeptide reads, in one-letter code: Asc-type amino acid transporter 1 (530 aa).

Positions 1-36 (MRRDSDMASHIQQPGGHGNPGPAPSPSPGPGPGPGA) are disordered. A compositionally biased stretch (pro residues) spans 21-33 (GPAPSPSPGPGPG). The next 10 membrane-spanning stretches (helical) occupy residues 46–66 (IGLV…GIFI), 78–98 (VGLA…GSLC), 119–139 (IFGG…MYPT), 192–212 (IQVI…TVGF), 274–294 (AIFI…VAYF), 316–336 (LLGY…FGGI), 368–388 (CTPI…MLVG), 394–414 (INYV…GLLV), 430–450 (LLVP…SFIS), and 454–474 (VCGV…LGVF). Residues 508-530 (EEENGPMGQPSPLPITDKPLKTQ) form a disordered region.

It belongs to the amino acid-polyamine-organocation (APC) superfamily. Disulfide-linked heterodimer with the amino acid transport protein SLC3A2/4F2hc.

The protein resides in the cell membrane. It catalyses the reaction L-alanine(in) + glycine(out) = L-alanine(out) + glycine(in). The catalysed reaction is L-serine(out) + L-alanine(in) = L-serine(in) + L-alanine(out). It carries out the reaction L-threonine(out) + L-alanine(in) = L-threonine(in) + L-alanine(out). The enzyme catalyses L-cysteine(out) + L-alanine(in) = L-cysteine(in) + L-alanine(out). It catalyses the reaction 2-aminoisobutanoate(out) + L-alanine(in) = 2-aminoisobutanoate(in) + L-alanine(out). The catalysed reaction is D-serine(out) + L-alanine(in) = D-serine(in) + L-alanine(out). It carries out the reaction D-alanine(out) + L-alanine(in) = D-alanine(in) + L-alanine(out). The enzyme catalyses L-valine(out) + L-alanine(in) = L-valine(in) + L-alanine(out). It catalyses the reaction L-methionine(out) + L-alanine(in) = L-methionine(in) + L-alanine(out). The catalysed reaction is beta-alanine(out) + L-alanine(in) = beta-alanine(in) + L-alanine(out). It carries out the reaction D-cysteine(out) + L-alanine(in) = D-cysteine(in) + L-alanine(out). The enzyme catalyses D-threonine(out) + L-alanine(in) = D-threonine(in) + L-alanine(out). It catalyses the reaction D-isoleucine(out) + D-serine(in) = D-isoleucine(in) + D-serine(out). The catalysed reaction is D-serine(in) = D-serine(out). Functionally, associates with SLC3A2/4F2hc to form a functional heterodimeric complex that translocates small neutral L- and D-amino acids across the plasma membrane. Preferentially mediates exchange transport, but can also operate via facilitated diffusion. Acts as a major transporter for glycine, L- and D-serine in the central nervous system. At the spinal cord and brainstem regulates glycine metabolism and glycinergic inhibitory neurotransmission by providing for glycine de novo synthesis from L-serine and glycine recycling from astrocytes to glycinergic motor neurons. At Schaffer collateral-CA1 synapses mediates D-serine and glycine release that modulates post-synaptic activation of NMDA receptors and excitatory glutamatergic transmission. May regulate D-serine release from mesenchymal progenitors located in developing subcutaneous adipose tissue, favoring white adipocyte over thermogenic beige adipocyte lineage commitment. The sequence is that of Asc-type amino acid transporter 1 (Slc7a10) from Rattus norvegicus (Rat).